Here is a 312-residue protein sequence, read N- to C-terminus: uncharacterized protein (312 aa).

Disordered stretches follow at residues 1-26 and 45-106; these read MQKD…AMVA and GNLQ…LPSG. The span at 8-17 shows a compositional bias: basic residues; that stretch reads RFQRNKKKIN. Over residues 68–77 the composition is skewed to basic and acidic residues; the sequence is NGKRNGDKVR. Residues 85–103 show a composition bias toward polar residues; that stretch reads GHSSYAGSRISGGNSNSHL.

This is an uncharacterized protein from Schizosaccharomyces pombe (strain 972 / ATCC 24843) (Fission yeast).